The sequence spans 127 residues: Translation initiation factor 5A (127 aa).

A Hypusine modification is found at lysine 35.

This sequence belongs to the eIF-5A family.

The protein localises to the cytoplasm. Its function is as follows. Functions by promoting the formation of the first peptide bond. This is Translation initiation factor 5A (eIF5A) from Methanothrix thermoacetophila (strain DSM 6194 / JCM 14653 / NBRC 101360 / PT) (Methanosaeta thermophila).